Reading from the N-terminus, the 216-residue chain is Thiamine-phosphate synthase (216 aa).

4-amino-2-methyl-5-(diphosphooxymethyl)pyrimidine contacts are provided by residues 37 to 41 (QVRSK) and Asp-68. Asp-69 and Asp-93 together coordinate Mg(2+). 4-amino-2-methyl-5-(diphosphooxymethyl)pyrimidine is bound at residue Thr-112. Residue 140–142 (TPT) participates in 2-[(2R,5Z)-2-carboxy-4-methylthiazol-5(2H)-ylidene]ethyl phosphate binding. Position 143 (Lys-143) interacts with 4-amino-2-methyl-5-(diphosphooxymethyl)pyrimidine.

It belongs to the thiamine-phosphate synthase family. Requires Mg(2+) as cofactor.

The enzyme catalyses 2-[(2R,5Z)-2-carboxy-4-methylthiazol-5(2H)-ylidene]ethyl phosphate + 4-amino-2-methyl-5-(diphosphooxymethyl)pyrimidine + 2 H(+) = thiamine phosphate + CO2 + diphosphate. It catalyses the reaction 2-(2-carboxy-4-methylthiazol-5-yl)ethyl phosphate + 4-amino-2-methyl-5-(diphosphooxymethyl)pyrimidine + 2 H(+) = thiamine phosphate + CO2 + diphosphate. The catalysed reaction is 4-methyl-5-(2-phosphooxyethyl)-thiazole + 4-amino-2-methyl-5-(diphosphooxymethyl)pyrimidine + H(+) = thiamine phosphate + diphosphate. It participates in cofactor biosynthesis; thiamine diphosphate biosynthesis; thiamine phosphate from 4-amino-2-methyl-5-diphosphomethylpyrimidine and 4-methyl-5-(2-phosphoethyl)-thiazole: step 1/1. In terms of biological role, condenses 4-methyl-5-(beta-hydroxyethyl)thiazole monophosphate (THZ-P) and 2-methyl-4-amino-5-hydroxymethyl pyrimidine pyrophosphate (HMP-PP) to form thiamine monophosphate (TMP). The protein is Thiamine-phosphate synthase of Corynebacterium efficiens (strain DSM 44549 / YS-314 / AJ 12310 / JCM 11189 / NBRC 100395).